Here is a 276-residue protein sequence, read N- to C-terminus: Protein canopy homolog 3 (276 aa).

An N-terminal signal peptide occupies residues 1 to 26 (MESMSELAPRCLLFPLLLLLPLLLLP). The Saposin B-type domain occupies 47–269 (SKCEVCKYVA…EGVQKASPLP (223 aa)). Intrachain disulfides connect C49-C206, C52-C194, and C104-C166. N-linked (GlcNAc...) asparagine glycosylation occurs at N153. Positions 153–179 (NETSAEVADLKKQCDVLVEEFEEVIED) form a coiled coil. The interval 218–276 (IASLGGKKSKKKRSGVKGSSSGSSKQRKELGGLGEDANAEEEEGVQKASPLPHSPPDEL) is disordered.

This sequence belongs to the canopy family. Interacts with HSP90B1; this interaction is disrupted in the presence of ATP. Interacts with TLR1, TLR2, TLR4 and TLR9. Strongest interaction with TLR4.

The protein resides in the endoplasmic reticulum. In terms of biological role, toll-like receptor (TLR)-specific co-chaperone for HSP90B1. Required for proper TLR folding, except that of TLR3, and hence controls TLR exit from the endoplasmic reticulum. Consequently, required for both innate and adaptive immune responses. This chain is Protein canopy homolog 3 (Cnpy3), found in Mus musculus (Mouse).